The following is a 393-amino-acid chain: Branched-chain-amino-acid aminotransferase, mitochondrial (393 aa).

A mitochondrion-targeting transit peptide spans 1–27 (MAAATLGQVWARKLLPVPWLLCGSKRC). Residue Tyr169 participates in substrate binding. Residue Lys230 is modified to N6-(pyridoxal phosphate)lysine. At Lys322 the chain carries N6-acetyllysine.

It belongs to the class-IV pyridoxal-phosphate-dependent aminotransferase family. In terms of assembly, homodimer. The cofactor is pyridoxal 5'-phosphate.

The protein resides in the mitochondrion. It catalyses the reaction L-leucine + 2-oxoglutarate = 4-methyl-2-oxopentanoate + L-glutamate. The catalysed reaction is L-isoleucine + 2-oxoglutarate = (S)-3-methyl-2-oxopentanoate + L-glutamate. The enzyme catalyses L-valine + 2-oxoglutarate = 3-methyl-2-oxobutanoate + L-glutamate. In terms of biological role, catalyzes the first reaction in the catabolism of the essential branched chain amino acids leucine, isoleucine, and valine. May also function as a transporter of branched chain alpha-keto acids. The sequence is that of Branched-chain-amino-acid aminotransferase, mitochondrial (Bcat2) from Mus musculus (Mouse).